We begin with the raw amino-acid sequence, 450 residues long: UDP-N-acetylmuramoylalanine--D-glutamate ligase (450 aa).

An ATP-binding site is contributed by 119–125 (GSNGKTT).

This sequence belongs to the MurCDEF family.

Its subcellular location is the cytoplasm. It carries out the reaction UDP-N-acetyl-alpha-D-muramoyl-L-alanine + D-glutamate + ATP = UDP-N-acetyl-alpha-D-muramoyl-L-alanyl-D-glutamate + ADP + phosphate + H(+). Its pathway is cell wall biogenesis; peptidoglycan biosynthesis. Cell wall formation. Catalyzes the addition of glutamate to the nucleotide precursor UDP-N-acetylmuramoyl-L-alanine (UMA). This Streptococcus thermophilus (strain ATCC BAA-491 / LMD-9) protein is UDP-N-acetylmuramoylalanine--D-glutamate ligase.